A 304-amino-acid polypeptide reads, in one-letter code: Transcription factor BEE 2 (304 aa).

The interval 74-132 (FHMEPVKNNGHSRAITLQNKRKPEGKTEKREKKKIKAEDETEPSMKGKSNMSNTETSSE) is disordered. A compositionally biased stretch (polar residues) spans 82–91 (NGHSRAITLQ). The span at 94 to 103 (RKPEGKTEKR) shows a compositional bias: basic and acidic residues. A compositionally biased stretch (polar residues) spans 120–132 (GKSNMSNTETSSE). The 51-residue stretch at 147 to 197 (EATDRHSLAERARREKISKKMKCLQDIVPGCNKVTGKAGMLDEIINYVQSL) folds into the bHLH domain.

Homodimer. In terms of tissue distribution, expressed in stems and flowers.

The protein localises to the nucleus. Positive regulator of brassinosteroid signaling. In Arabidopsis thaliana (Mouse-ear cress), this protein is Transcription factor BEE 2 (BEE2).